The sequence spans 328 residues: Malate dehydrogenase (328 aa).

Residue 12-18 coordinates NAD(+); that stretch reads GAAGQIG. Substrate is bound by residues R93 and R99. Residues N106, Q113, and 130-132 contribute to the NAD(+) site; that span reads VGN. Residues N132 and R166 each contribute to the substrate site. Residue H191 is the Proton acceptor of the active site.

It belongs to the LDH/MDH superfamily. MDH type 2 family.

It catalyses the reaction (S)-malate + NAD(+) = oxaloacetate + NADH + H(+). Catalyzes the reversible oxidation of malate to oxaloacetate. This is Malate dehydrogenase from Dechloromonas aromatica (strain RCB).